We begin with the raw amino-acid sequence, 196 residues long: Nucleoid occlusion factor SlmA (196 aa).

The 62-residue stretch at 7-68 folds into the HTH tetR-type domain; that stretch reads INRREEILQA…GLIEFIEESL (62 aa). Residues 31–50 constitute a DNA-binding region (H-T-H motif); it reads TTAKLAKQVGVSEAALYRHF. Positions 110-139 form a coiled coil; it reads HALMFENERLRDRINQLFERIETSLRQILR.

The protein belongs to the nucleoid occlusion factor SlmA family. In terms of assembly, homodimer. Interacts with FtsZ.

Its subcellular location is the cytoplasm. It localises to the nucleoid. Required for nucleoid occlusion (NO) phenomenon, which prevents Z-ring formation and cell division over the nucleoid. Acts as a DNA-associated cell division inhibitor that binds simultaneously chromosomal DNA and FtsZ, and disrupts the assembly of FtsZ polymers. SlmA-DNA-binding sequences (SBS) are dispersed on non-Ter regions of the chromosome, preventing FtsZ polymerization at these regions. The chain is Nucleoid occlusion factor SlmA from Vibrio cholerae serotype O1 (strain ATCC 39315 / El Tor Inaba N16961).